Here is a 365-residue protein sequence, read N- to C-terminus: Protein-glutamate methylesterase/protein-glutamine glutaminase 2 (365 aa).

A Response regulatory domain is found at 6–123; that stretch reads RVLIIDDSAS…ADSLSDDAMR (118 aa). A 4-aspartylphosphate modification is found at Asp-57. In terms of domain architecture, CheB-type methylesterase spans 173-359; the sequence is AKTTEMVVCV…PLDQIAREVL (187 aa). Active-site residues include Ser-185, His-211, and Asp-307.

This sequence belongs to the CheB family. Post-translationally, phosphorylated by CheA. Phosphorylation of the N-terminal regulatory domain activates the methylesterase activity.

It is found in the cytoplasm. The catalysed reaction is [protein]-L-glutamate 5-O-methyl ester + H2O = L-glutamyl-[protein] + methanol + H(+). It catalyses the reaction L-glutaminyl-[protein] + H2O = L-glutamyl-[protein] + NH4(+). Functionally, involved in chemotaxis. Part of a chemotaxis signal transduction system that modulates chemotaxis in response to various stimuli. Catalyzes the demethylation of specific methylglutamate residues introduced into the chemoreceptors (methyl-accepting chemotaxis proteins or MCP) by CheR. Also mediates the irreversible deamidation of specific glutamine residues to glutamic acid. This is Protein-glutamate methylesterase/protein-glutamine glutaminase 2 from Rhizobium johnstonii (strain DSM 114642 / LMG 32736 / 3841) (Rhizobium leguminosarum bv. viciae).